Here is a 1209-residue protein sequence, read N- to C-terminus: 3',5'-cyclic-AMP phosphodiesterase, isoform I (1209 aa).

7 disordered regions span residues 16-35 (NVAK…GSGT), 59-82 (GGGS…KRKS), 275-353 (LYSG…PLPP), 372-403 (SATS…SPRI), 442-498 (ETLA…MQAE), 626-655 (VPAS…LSQG), and 754-792 (SAGQ…RLPT). Composition is skewed to gly residues over residues 25–35 (SSNGTGNGSGT) and 59–77 (GGGS…GSGS). The segment covering 275-290 (LYSGSNPSTNPCQSAV) has biased composition (polar residues). Residues 291–314 (QNQGQNSNPNPNQNPNTNPNQNQQ) show a composition bias toward low complexity. Polar residues predominate over residues 315-324 (RCSCQPQTSP). Residues 372–383 (SATSSSAGTVPP) are compositionally biased toward low complexity. A compositionally biased stretch (polar residues) spans 385–400 (GQQTQEYIAGTSSTPS). Composition is skewed to low complexity over residues 445 to 462 (ASSS…NSSS) and 472 to 483 (TSSSASALATSH). 2 stretches are compositionally biased toward polar residues: residues 484-498 (PSNS…MQAE) and 627-645 (PASN…SRSG). The 330-residue stretch at 795–1124 (VETPRENELG…DYYQSMIPPS (330 aa)) folds into the PDEase domain. Catalysis depends on His871, which acts as the Proton donor. Position 871-875 (871-875 (HNSLH)) interacts with 3',5'-cyclic AMP. A divalent metal cation contacts are provided by His875, His911, Asp912, and Asp1029. Asp912, Asp1029, and Gln1080 together coordinate 3',5'-cyclic AMP. Acidic residues predominate over residues 1146 to 1163 (EESDQENLAELEEGDESG). A disordered region spans residues 1146–1209 (EESDQENLAE…CQNQPQHGGM (64 aa)). The span at 1164–1181 (GESTTTGTTGTTAASALS) shows a compositional bias: low complexity. Residues 1182–1193 (GAGGGGGGGGGM) are compositionally biased toward gly residues. Residues 1199–1209 (GCQNQPQHGGM) are compositionally biased toward polar residues.

It belongs to the cyclic nucleotide phosphodiesterase family. PDE4 subfamily. In terms of assembly, monomer. Requires a divalent metal cation as cofactor.

The enzyme catalyses 3',5'-cyclic AMP + H2O = AMP + H(+). It functions in the pathway purine metabolism; 3',5'-cyclic AMP degradation; AMP from 3',5'-cyclic AMP: step 1/1. Hydrolyzes the second messenger cAMP, which is a key regulator of many important physiological processes. Vital for female fertility. Required for learning/memory. This Drosophila melanogaster (Fruit fly) protein is 3',5'-cyclic-AMP phosphodiesterase, isoform I.